The chain runs to 1405 residues: DNA-directed RNA polymerase subunit beta' (1405 aa).

Positions 70, 72, 85, and 88 each coordinate Zn(2+). Mg(2+) is bound by residues Asp-460, Asp-462, and Asp-464. Positions 815, 889, 896, and 899 each coordinate Zn(2+). The tract at residues 1363 to 1388 (LAHHAERRRRREDPESTANPSAFDVE) is disordered.

The protein belongs to the RNA polymerase beta' chain family. The RNAP catalytic core consists of 2 alpha, 1 beta, 1 beta' and 1 omega subunit. When a sigma factor is associated with the core the holoenzyme is formed, which can initiate transcription. The cofactor is Mg(2+). Requires Zn(2+) as cofactor.

The catalysed reaction is RNA(n) + a ribonucleoside 5'-triphosphate = RNA(n+1) + diphosphate. Its function is as follows. DNA-dependent RNA polymerase catalyzes the transcription of DNA into RNA using the four ribonucleoside triphosphates as substrates. The chain is DNA-directed RNA polymerase subunit beta' from Chromohalobacter salexigens (strain ATCC BAA-138 / DSM 3043 / CIP 106854 / NCIMB 13768 / 1H11).